Consider the following 604-residue polypeptide: Elongation factor 4 (604 aa).

Residues 7–189 (SKIRNFCIIA…SIVHLVPPPS (183 aa)) form the tr-type G domain. Residues 19–24 (DHGKST) and 136–139 (NKID) each bind GTP.

Belongs to the TRAFAC class translation factor GTPase superfamily. Classic translation factor GTPase family. LepA subfamily.

The protein localises to the cell inner membrane. The enzyme catalyses GTP + H2O = GDP + phosphate + H(+). Functionally, required for accurate and efficient protein synthesis under certain stress conditions. May act as a fidelity factor of the translation reaction, by catalyzing a one-codon backward translocation of tRNAs on improperly translocated ribosomes. Back-translocation proceeds from a post-translocation (POST) complex to a pre-translocation (PRE) complex, thus giving elongation factor G a second chance to translocate the tRNAs correctly. Binds to ribosomes in a GTP-dependent manner. The sequence is that of Elongation factor 4 from Synechococcus sp. (strain ATCC 27144 / PCC 6301 / SAUG 1402/1) (Anacystis nidulans).